The sequence spans 528 residues: Ivanolysin (528 aa).

An N-terminal signal peptide occupies residues 1 to 23 (MKKIMLLLMTLLLVSLPLAQEAQ). A run of 4 beta stranded transmembrane segments spans residues 213-226 (ESQLVAKFGAAFKA), 233-242 (VNFGAISEGK), 311-320 (STRVKAAFDT), and 328-340 (KGDTELENIIQNA). Residues 482-492 (ECTGLAWEWWR) carry the Conserved undecapeptide motif. The short motif at 514-515 (TL) is the Cholesterol binding element.

Belongs to the cholesterol-dependent cytolysin family. Homooligomeric pore complex of 35 to 50 subunits; when inserted in the host membrane.

It is found in the secreted. It localises to the host membrane. Functionally, a cholesterol-dependent toxin that causes cytolysis by forming pores in cholesterol containing host membranes. After binding to target membranes, the protein undergoes a major conformation change, leading to its insertion in the host membrane and formation of an oligomeric pore complex. Cholesterol is required for binding to host membranes, membrane insertion and pore formation; cholesterol binding is mediated by a Thr-Leu pair in the C-terminus. Can be reversibly inactivated by oxidation. The chain is Ivanolysin (ilo) from Listeria ivanovii.